A 209-amino-acid chain; its full sequence is Uracil phosphoribosyltransferase (209 aa).

Residues arginine 79, arginine 104, and 131–139 each bind 5-phospho-alpha-D-ribose 1-diphosphate; that span reads DPMLATGNS. Uracil contacts are provided by residues isoleucine 194 and 199 to 201; that span reads GDA. Aspartate 200 is a 5-phospho-alpha-D-ribose 1-diphosphate binding site.

It belongs to the UPRTase family. Requires Mg(2+) as cofactor.

The enzyme catalyses UMP + diphosphate = 5-phospho-alpha-D-ribose 1-diphosphate + uracil. It functions in the pathway pyrimidine metabolism; UMP biosynthesis via salvage pathway; UMP from uracil: step 1/1. With respect to regulation, allosterically activated by GTP. Catalyzes the conversion of uracil and 5-phospho-alpha-D-ribose 1-diphosphate (PRPP) to UMP and diphosphate. This Variovorax paradoxus (strain S110) protein is Uracil phosphoribosyltransferase.